Reading from the N-terminus, the 218-residue chain is ATP-dependent Clp protease proteolytic subunit 2 (218 aa).

Residue Ser-114 is the Nucleophile of the active site. The active site involves His-139.

This sequence belongs to the peptidase S14 family. In terms of assembly, fourteen ClpP subunits assemble into 2 heptameric rings which stack back to back to give a disk-like structure with a central cavity, resembling the structure of eukaryotic proteasomes.

The protein resides in the cytoplasm. The enzyme catalyses Hydrolysis of proteins to small peptides in the presence of ATP and magnesium. alpha-casein is the usual test substrate. In the absence of ATP, only oligopeptides shorter than five residues are hydrolyzed (such as succinyl-Leu-Tyr-|-NHMec, and Leu-Tyr-Leu-|-Tyr-Trp, in which cleavage of the -Tyr-|-Leu- and -Tyr-|-Trp bonds also occurs).. Cleaves peptides in various proteins in a process that requires ATP hydrolysis. Has a chymotrypsin-like activity. Plays a major role in the degradation of misfolded proteins. Probably partially responsible for degradation of ECF sigma factor SigR prime. The chain is ATP-dependent Clp protease proteolytic subunit 2 from Streptomyces coelicolor (strain ATCC BAA-471 / A3(2) / M145).